Reading from the N-terminus, the 509-residue chain is ATP synthase subunit alpha (509 aa).

169–176 (GDRQTGKT) lines the ATP pocket.

Belongs to the ATPase alpha/beta chains family. F-type ATPases have 2 components, CF(1) - the catalytic core - and CF(0) - the membrane proton channel. CF(1) has five subunits: alpha(3), beta(3), gamma(1), delta(1), epsilon(1). CF(0) has three main subunits: a(1), b(2) and c(9-12). The alpha and beta chains form an alternating ring which encloses part of the gamma chain. CF(1) is attached to CF(0) by a central stalk formed by the gamma and epsilon chains, while a peripheral stalk is formed by the delta and b chains.

The protein localises to the cell inner membrane. It catalyses the reaction ATP + H2O + 4 H(+)(in) = ADP + phosphate + 5 H(+)(out). Produces ATP from ADP in the presence of a proton gradient across the membrane. The alpha chain is a regulatory subunit. This is ATP synthase subunit alpha from Brucella anthropi (strain ATCC 49188 / DSM 6882 / CCUG 24695 / JCM 21032 / LMG 3331 / NBRC 15819 / NCTC 12168 / Alc 37) (Ochrobactrum anthropi).